We begin with the raw amino-acid sequence, 578 residues long: Asparagine synthetase [glutamine-hydrolyzing] 3 (578 aa).

Cys2 (for GATase activity) is an active-site residue. The Glutamine amidotransferase type-2 domain maps to 2–185 (CGILAVLGCV…PGHIYSSKQG (184 aa)). L-glutamine contacts are provided by residues 50–54 (RLAIV), 75–77 (NGE), and Asp98. The region spanning 210–450 (VRNTFEKAVI…LPKHILYRQK (241 aa)) is the Asparagine synthetase domain. ATP contacts are provided by residues Leu231, Ile267, and 341–342 (SG). The segment covering 555–572 (GEDKTEDSRPEKLQKLAE) has biased composition (basic and acidic residues). Residues 555-578 (GEDKTEDSRPEKLQKLAEKTPAIV) are disordered.

It carries out the reaction L-aspartate + L-glutamine + ATP + H2O = L-asparagine + L-glutamate + AMP + diphosphate + H(+). Its pathway is amino-acid biosynthesis; L-asparagine biosynthesis. Functionally, essential for nitrogen assimilation, distribution and remobilization within the plant via the phloem. This chain is Asparagine synthetase [glutamine-hydrolyzing] 3 (ASN3), found in Arabidopsis thaliana (Mouse-ear cress).